The primary structure comprises 430 residues: Adenylosuccinate synthetase (430 aa).

Residues 12 to 18 and 40 to 42 contribute to the GTP site; these read GDEGKGK and GHT. Catalysis depends on aspartate 13, which acts as the Proton acceptor. Positions 13 and 40 each coordinate Mg(2+). IMP-binding positions include 13–16, 38–41, threonine 130, arginine 144, glutamine 224, threonine 239, and arginine 303; these read DEGK and NAGH. Histidine 41 functions as the Proton donor in the catalytic mechanism. 299 to 305 serves as a coordination point for substrate; sequence TVTGRKR. GTP is bound by residues arginine 305, 331-333, and 413-415; these read KLD and STS.

The protein belongs to the adenylosuccinate synthetase family. Homodimer. The cofactor is Mg(2+).

Its subcellular location is the cytoplasm. The enzyme catalyses IMP + L-aspartate + GTP = N(6)-(1,2-dicarboxyethyl)-AMP + GDP + phosphate + 2 H(+). Its pathway is purine metabolism; AMP biosynthesis via de novo pathway; AMP from IMP: step 1/2. In terms of biological role, plays an important role in the de novo pathway of purine nucleotide biosynthesis. Catalyzes the first committed step in the biosynthesis of AMP from IMP. The chain is Adenylosuccinate synthetase from Cereibacter sphaeroides (strain KD131 / KCTC 12085) (Rhodobacter sphaeroides).